Here is a 690-residue protein sequence, read N- to C-terminus: Protein MODIFIED TRANSPORT TO THE VACUOLE 1 (690 aa).

The VHS domain occupies 20-150 (VTSDEDKVAP…PESINRRIEG (131 aa)). Disordered stretches follow at residues 228–258 (DGNY…SVRV) and 518–551 (FSID…HQAP). Residues 243–257 (GHASGEASESSASVR) are compositionally biased toward low complexity. The segment covering 520–536 (IDENNSNQKGSSSSTLP) has biased composition (polar residues).

In terms of assembly, binds to clathrin heavy chain. As to expression, expressed in inflorescence stems, stigmas, roots, roots meristems, embryos, and floral and leaf vasculatures, but absent from the floral abscission zone.

Its subcellular location is the golgi apparatus. It localises to the trans-Golgi network. The protein localises to the cytoplasmic vesicle. The protein resides in the clathrin-coated vesicle. Its function is as follows. Mediates clathrin-dependent trafficking of vacuolar cargo from the trans-Golgi network (TGN). Promotes plant growth. This chain is Protein MODIFIED TRANSPORT TO THE VACUOLE 1, found in Arabidopsis thaliana (Mouse-ear cress).